The following is a 605-amino-acid chain: Kelch-like protein 41b (605 aa).

The 71-residue stretch at 32-102 (VDCTLKIGDR…YSAEIDLVDD (71 aa)) folds into the BTB domain. One can recognise a BACK domain in the interval 136–238 (CLAVFRLGLV…PEKYFREKVE (103 aa)). Kelch repeat units lie at residues 345–397 (QLFI…ESEN), 398–446 (LLFA…SHNN), 447–494 (LVYC…VHKG), 496–541 (IIVT…SSGG), and 543–598 (LFSI…MRLN).

The protein resides in the cytoplasm. The protein localises to the cytoskeleton. It localises to the sarcoplasmic reticulum membrane. It is found in the endoplasmic reticulum membrane. Its function is as follows. Involved in skeletal muscle development and maintenance. This chain is Kelch-like protein 41b, found in Danio rerio (Zebrafish).